The primary structure comprises 50 residues: MQTLSSAPDPAVSVAVTILAVLLALTGFGLWTAFGPKATKLTDPWDDHDD.

A helical transmembrane segment spans residues 14–34 (VAVTILAVLLALTGFGLWTAF).

Belongs to the PsbN family.

The protein localises to the cellular thylakoid membrane. May play a role in photosystem I and II biogenesis. This chain is Protein PsbN, found in Prochlorococcus marinus (strain MIT 9515).